A 312-amino-acid chain; its full sequence is NAD(P)(+)--arginine ADP-ribosyltransferase 1 (312 aa).

The signal sequence occupies residues 1–20; the sequence is MELLALRWVLLAGTLLSTSA. A propeptide spanning residues 21 to 31 is cleaved from the precursor; the sequence is ASSALQEGDLG. Cystine bridges form between Cys51/Cys260 and Cys159/Cys208. The TR mART core domain occupies 71 to 256; that stretch reads IAYAVTWRQA…IQLHSKGKMS (186 aa). 3 residues coordinate NAD(+): Tyr108, Arg164, and Gln183. Arg164 is an active-site residue. Ser186 is an active-site residue. Ser217 provides a ligand contact to NAD(+). Glu224 is an active-site residue. The propeptide occupies 267 to 312; the sequence is GGQWGRGHQEVGLGLSPGLSLPVLPCRRRVWEGLGHREGDPIPAAV.

It belongs to the Arg-specific ADP-ribosyltransferase family.

It is found in the secreted. Its subcellular location is the extracellular space. It catalyses the reaction L-arginyl-[protein] + NAD(+) = N(omega)-(ADP-D-ribosyl)-L-arginyl-[protein] + nicotinamide + H(+). The sequence is that of NAD(P)(+)--arginine ADP-ribosyltransferase 1 from Gallus gallus (Chicken).